The following is a 658-amino-acid chain: UvrABC system protein C (658 aa).

A GIY-YIG domain is found at 62-140; it reads PKPGVYRMLD…IKRFRPPYNV (79 aa). The UVR domain maps to 250 to 285; the sequence is GAVQREIEAQMHKAAEDLDFERAAMLRDRLRAATFI.

This sequence belongs to the UvrC family. Interacts with UvrB in an incision complex.

Its subcellular location is the cytoplasm. The UvrABC repair system catalyzes the recognition and processing of DNA lesions. UvrC both incises the 5' and 3' sides of the lesion. The N-terminal half is responsible for the 3' incision and the C-terminal half is responsible for the 5' incision. This is UvrABC system protein C from Novosphingobium aromaticivorans (strain ATCC 700278 / DSM 12444 / CCUG 56034 / CIP 105152 / NBRC 16084 / F199).